A 325-amino-acid polypeptide reads, in one-letter code: mRNA decay activator protein ZFP36 (325 aa).

The segment at 1–15 (MDLAAIYKSLLSLSP) is necessary for nuclear export. Residues 1–98 (MDLAAIYKSL…PTSPTATPTT (98 aa)) form a necessary and sufficient for the association with mRNA decay enzymes and mRNA decay activation region. 2 necessary for localization of ARE-containing mRNAs to processing bodies (PBs) regions span residues 1–172 (MDLA…DLAA) and 98–325 (TSSR…SVSE). The span at 15–48 (PELPSDLGETESSTSWASSGPWSLSSSDSSLPEA) shows a compositional bias: low complexity. A disordered region spans residues 15 to 101 (PELPSDLGET…PTATPTTSSR (87 aa)). A Phosphoserine; by MAPKAPK2 modification is found at serine 58. Phosphoserine is present on serine 64. Residues 69–73 (PPPPG) form a P-P-P-P-G repeat. A compositionally biased stretch (low complexity) spans 75-101 (APLAPRPSSELSPSPTSPTATPTTSSR). Phosphoserine is present on residues serine 86 and serine 88. At threonine 90 the chain carries Phosphothreonine. Position 91 is a phosphoserine (serine 91). The tract at residues 93–166 (TATPTTSSRY…GSRCHFIHNP (74 aa)) is necessary for nuclear localization. Residues 95–171 (TPTTSSRYKT…FIHNPSEDLA (77 aa)) form a necessary for RNA-binding region. 2 C3H1-type zinc fingers span residues 101 to 129 (RYKT…HGLG) and 139 to 167 (KYKT…HNPS). The segment at 101–192 (RYKTELCRTF…ISFSGLPSGR (92 aa)) is necessary for interaction with PABPN1. Serine 167 carries the post-translational modification Phosphoserine. The interval 172–325 (APGHPHVLRQ…PIFNRISVSE (154 aa)) is necessary for mRNA decay activation. Residue serine 184 is modified to Phosphoserine; by MAPKAPK2. 2 disordered regions span residues 185–248 (FSGL…TPAC) and 260–325 (VWGP…SVSE). Serine 195 carries the post-translational modification Phosphoserine. The stretch at 196-200 (PPPAS) is one P-P-P-P-G repeat. The segment covering 204 to 214 (PSVPSWSFSPS) has biased composition (low complexity). Serine 216 is modified (phosphoserine). The stretch at 217-222 (PPPPPG) is one P-P-P-P-G repeat. At serine 227 the chain carries Phosphoserine; by MAPK1; in vitro. Residues serine 275, serine 295, and serine 322 each carry the phosphoserine modification. Residues 285–295 (SSGSSLGGSDS) show a composition bias toward low complexity. Residues 311–325 (APRRLPIFNRISVSE) form an interaction with CNOT1 region.

As to quaternary structure, associates with cytoplasmic CCR4-NOT and PAN2-PAN3 deadenylase complexes to trigger ARE-containing mRNA deadenylation and decay processes. Part of a mRNA decay activation complex at least composed of poly(A)-specific exoribonucleases CNOT6, EXOSC2 and XRN1 and mRNA-decapping enzymes DCP1A and DCP2. Associates with the RNA exosome complex. Interacts (via phosphorylated form) with 14-3-3 proteins; these interactions promote exclusion of ZFP36 from cytoplasmic stress granules in response to arsenite treatment in a MAPKAPK2-dependent manner and does not prevent CCR4-NOT deadenylase complex recruitment or ZFP36-induced ARE-containing mRNA deadenylation and decay processes. Interacts with 14-3-3 proteins; these interactions occur in response to rapamycin in an Akt-dependent manner. Interacts with AGO2 and AGO4. Interacts (via C-terminus) with CNOT1; this interaction occurs in a RNA-independent manner and induces mRNA deadenylation. Interacts (via N-terminus) with CNOT6. Interacts with CNOT6L. Interacts (via C-terminus) with CNOT7; this interaction occurs in a RNA-independent manner, induces mRNA deadenylation and is inhibited in a phosphorylation MAPKAPK2-dependent manner. Interacts (via unphosphorylated form) with CNOT8; this interaction occurs in a RNA-independent manner and is inhibited in a phosphorylation MAPKAPK2-dependent manner. Interacts with DCP1A. Interacts (via N-terminus) with DCP2. Interacts with EDC3. Interacts (via N-terminus) with EXOSC2. Interacts with heat shock 70 kDa proteins. Interacts with KHSRP; this interaction increases upon cytokine-induced treatment. Interacts with MAP3K4; this interaction enhances the association with SH3KBP1/CIN85. Interacts with MAPKAPK2; this interaction occurs upon skeletal muscle satellite cell activation. Interacts with NCL. Interacts with NUP214; this interaction increases upon lipopolysaccharide (LPS) stimulation. Interacts with PABPC1; this interaction occurs in a RNA-dependent manner. Interacts (via hypophosphorylated form) with PABPN1 (via RRM domain and C-terminal arginine-rich region); this interaction occurs in the nucleus in a RNA-independent manner, decreases in presence of single-stranded poly(A) RNA-oligomer and in a p38 MAPK-dependent-manner and inhibits nuclear poly(A) tail synthesis. Interacts with PAN2. Interacts (via C3H1-type zinc finger domains) with PKM. Interacts (via C3H1-type zinc finger domains) with nuclear RNA poly(A) polymerase. Interacts with PPP2CA; this interaction occurs in LPS-stimulated cells and induces ZFP36 dephosphorylation, and hence may promote ARE-containing mRNAs decay. Interacts (via C-terminus) with PRR5L (via C-terminus); this interaction may accelerate ZFP36-mediated mRNA decay during stress. Interacts (via C-terminus) with SFN; this interaction occurs in a phosphorylation-dependent manner. Interacts (via extreme C-terminal region) with SH3KBP1/CIN85 (via SH3 domains); this interaction enhances MAP3K4-induced phosphorylation of ZFP36 at Ser-64 and Ser-91 and does not alter neither ZFP36 binding to ARE-containing transcripts nor TNF-alpha mRNA decay. Interacts with XRN1. Interacts (via C-terminus and Ser-184 phosphorylated form) with YWHAB; this interaction occurs in a p38/MAPKAPK2-dependent manner, increases cytoplasmic localization of ZFP36 and protects ZFP36 from Ser-184 dephosphorylation by serine/threonine phosphatase 2A, and hence may be crucial for stabilizing ARE-containing mRNAs. Interacts (via phosphorylated form) with YWHAE. Interacts (via C-terminus) with YWHAG; this interaction occurs in a phosphorylation-dependent manner. Interacts with YWHAH; this interaction occurs in a phosphorylation-dependent manner. Interacts with YWHAQ; this interaction occurs in a phosphorylation-dependent manner. Interacts with (via C-terminus) YWHAZ; this interaction occurs in a phosphorylation-dependent manner. Does not interact with SH3KBP1. Interacts (via P-P-P-P-G repeats) with GIGYF2; the interaction is direct. In terms of processing, phosphorylated. Phosphorylation at serine and/or threonine residues occurs in a p38 MAPK- and MAPKAPK2-dependent manner. Phosphorylated by MAPKAPK2 at Ser-58 and Ser-184; phosphorylation increases its stability and cytoplasmic localization, promotes binding to 14-3-3 adapter proteins and inhibits the recruitment of cytoplasmic CCR4-NOT and PAN2-PAN3 deadenylase complexes to the mRNA decay machinery, thereby inhibiting ZFP36-induced ARE-containing mRNA deadenylation and decay processes. Phosphorylation by MAPKAPK2 does not impair ARE-containing RNA-binding. Phosphorylated in a MAPKAPK2- and p38 MAPK-dependent manner upon skeletal muscle satellite cell activation; this phosphorylation inhibits ZFP36-mediated mRNA decay activity, and hence stabilizes MYOD1 mRNA. Phosphorylated by MAPK1 upon mitogen stimulation. Phosphorylated at Ser-64 and Ser-91; these phosphorylations increase in a SH3KBP1-dependent manner. Phosphorylated at serine and threonine residues in a pyruvate kinase PKM- and p38 MAPK-dependent manner. Phosphorylation at Ser-58 may participate in the PKM-mediated degradation of ZFP36 in a p38 MAPK-dependent manner. Dephosphorylated by serine/threonine phosphatase 2A at Ser-184. Ubiquitinated; pyruvate kinase (PKM)-dependent ubiquitination leads to proteasomal degradation through a p38 MAPK signaling pathway.

It localises to the nucleus. The protein resides in the cytoplasm. Its subcellular location is the cytoplasmic granule. The protein localises to the P-body. In terms of biological role, zinc-finger RNA-binding protein that destabilizes numerous cytoplasmic AU-rich element (ARE)-containing mRNA transcripts by promoting their poly(A) tail removal or deadenylation, and hence provide a mechanism for attenuating protein synthesis. Acts as an 3'-untranslated region (UTR) ARE mRNA-binding adapter protein to communicate signaling events to the mRNA decay machinery. Recruits deadenylase CNOT7 (and probably the CCR4-NOT complex) via association with CNOT1, and hence promotes ARE-mediated mRNA deadenylation. Also functions by recruiting components of the cytoplasmic RNA decay machinery to the bound ARE-containing mRNAs. Self regulates by destabilizing its own mRNA. Binds to 3'-UTR ARE of numerous mRNAs. Also binds to ARE of its own mRNA. Plays a role in anti-inflammatory responses; suppresses tumor necrosis factor (TNF)-alpha production by stimulating ARE-mediated TNF-alpha mRNA decay and several other inflammatory ARE-containing mRNAs in interferon (IFN)- and/or lipopolysaccharide (LPS)-induced macrophages. Also plays a role in the regulation of dendritic cell maturation at the post-transcriptional level, and hence operates as part of a negative feedback loop to limit the inflammatory response. Promotes ARE-mediated mRNA decay of hypoxia-inducible factor HIF1A mRNA during the response of endothelial cells to hypoxia. Positively regulates early adipogenesis of preadipocytes by promoting ARE-mediated mRNA decay of immediate early genes (IEGs). Negatively regulates hematopoietic/erythroid cell differentiation by promoting ARE-mediated mRNA decay of the transcription factor STAT5B mRNA. Plays a role in maintaining skeletal muscle satellite cell quiescence by promoting ARE-mediated mRNA decay of the myogenic determination factor MYOD1 mRNA. Also associates with and regulates the expression of non-ARE-containing target mRNAs at the post-transcriptional level, such as MHC class I mRNAs. Participates in association with argonaute RISC catalytic components in the ARE-mediated mRNA decay mechanism; assists microRNA (miRNA) targeting ARE-containing mRNAs. May also play a role in the regulation of cytoplasmic mRNA decapping; enhances decapping of ARE-containing RNAs, in vitro. Involved in the delivery of target ARE-mRNAs to processing bodies (PBs). In addition to its cytosolic mRNA-decay function, affects nuclear pre-mRNA processing. Negatively regulates nuclear poly(A)-binding protein PABPN1-stimulated polyadenylation activity on ARE-containing pre-mRNA during LPS-stimulated macrophages. Also involved in the regulation of stress granule (SG) and P-body (PB) formation and fusion. Plays a role in the regulation of keratinocyte proliferation, differentiation and apoptosis. Plays a role as a tumor suppressor by inhibiting cell proliferation in breast cancer cells. The polypeptide is mRNA decay activator protein ZFP36 (Ovis aries (Sheep)).